A 1085-amino-acid polypeptide reads, in one-letter code: MPHFTVVPVDGPRRGDYDNLEGLSWVDYGERAELDDSDGHGNHRESSPFLSPLEASRGIDYYDRNLALFEEELDIRPKVSSLLGKLVSYTNLTQGAKEHEEAESGEGTRRRAAEAPSMGTLMGVYLPCLQNIFGVILFLRLTWMVGTAGVLQALLIVLICCCCTLLTAISMSAIATNGVVPAGGSYFMISRSLGPEFGGAVGLCFYLGTTFAAAMYILGAIEILLTYIAPPAAIFYPSGAHDTSNATLNNMRVYGTIFLTFMTLVVFVGVKYVNKFASLFLACVIISILSIYAGGIKSIFDPPVFPVCMLGNRTLSRDQFDICAKTAVVDNETVATQLWSFFCHSPNLTTDSCDPYFMLNNVTEIPGIPGAAAGVLQENLWSAYLEKGDIVEKHGLPSADAPSLKESLPLYVVADIATSFTVLVGIFFPSVTGIMAGSNRSGDLRDAQKSIPVGTILAIITTSLVYFSSVVLFGACIEGVVLRDKYGDGVSRNLVVGTLAWPSPWVIVIGSFFSTCGAGLQSLTGAPRLLQAIAKDNIIPFLRVFGHGKVNGEPTWALLLTALIAELGILIASLDMVAPILSMFFLMCYLFVNLACAVQTLLRTPNWRPRFKYYHWALSFLGMSLCLALMFVSSWYYALVAMLIAGMIYKYIEYQGAEKEWGDGIRGLSLSAARYALLRLEEGPPHTKNWRPQLLVLLKLDEDLHVKYPRLLTFASQLKAGKGLTIVGSVIQGSFLESYGEAQAAEQTIKNMMEIEKVKGFCQVVVASKVREGLAHLIQSCGLGGMRHNSVVLGWPYGWRQSEDPRAWKTFIDTVRCTTAAHLALLVPKNIAFYPSNHERYLEGHIDVWWIVHDGGMLMLLPFLLRQHKVWRKCRMRIFTVAQMDDNSIQMKKDLAVFLYHLRLEAEVEVVEMHNSDISAYTYERTLMMEQRSQMLRQMRLTKTEREREAQLVKDRHSALRLESLYSDEEDESAVGADKIQMTWTRDKYMTETWDPSHAPDNFRELVHIKPDQSNVRRMHTAVKLNEVIVTRSHDARLVLLNMPGPPRNSEGDENYMEFLEVLTEGLERVLLVRGGGREVITIYS.

Over 1 to 119 the chain is Cytoplasmic; it reads MPHFTVVPVD…RRAAEAPSMG (119 aa). 5 positions are modified to phosphoserine: serine 24, serine 47, serine 51, serine 81, and serine 88. A discontinuously helical membrane pass occupies residues 120-141; it reads TLMGVYLPCLQNIFGVILFLRL. 2 residues coordinate K(+): asparagine 131 and isoleucine 132. Topologically, residues 142-149 are extracellular; that stretch reads TWMVGTAG. Residues 150–172 traverse the membrane as a helical segment; that stretch reads VLQALLIVLICCCCTLLTAISMS. The Cytoplasmic segment spans residues 173-196; the sequence is AIATNGVVPAGGSYFMISRSLGPE. A helical transmembrane segment spans residues 197–225; it reads FGGAVGLCFYLGTTFAAAMYILGAIEILL. A K(+)-binding site is contributed by tyrosine 216. The Extracellular portion of the chain corresponds to 226 to 248; the sequence is TYIAPPAAIFYPSGAHDTSNATL. Residue asparagine 245 is glycosylated (N-linked (GlcNAc...) asparagine). Helical transmembrane passes span 249–271 and 272–297; these read NNMRVYGTIFLTFMTLVVFVGVK and YVNKFASLFLACVIISILSIYAGGIK. Topologically, residues 298–419 are extracellular; it reads SIFDPPVFPV…LYVVADIATS (122 aa). An intrachain disulfide couples cysteine 308 to cysteine 323. N-linked (GlcNAc...) asparagine glycans are attached at residues asparagine 312, asparagine 331, asparagine 347, and asparagine 361. An intrachain disulfide couples cysteine 343 to cysteine 353. Residues 420–440 form a helical membrane-spanning segment; the sequence is FTVLVGIFFPSVTGIMAGSNR. Proline 429 and threonine 432 together coordinate K(+). The chloride site is built by glycine 433, isoleucine 434, and methionine 435. Topologically, residues 441–450 are cytoplasmic; sequence SGDLRDAQKS. A helical transmembrane segment spans residues 451–473; sequence IPVGTILAIITTSLVYFSSVVLF. Residues 474–504 are Extracellular-facing; that stretch reads GACIEGVVLRDKYGDGVSRNLVVGTLAWPSP. Residues 505–531 form a helical membrane-spanning segment; the sequence is WVIVIGSFFSTCGAGLQSLTGAPRLLQ. The Cytoplasmic segment spans residues 532–554; the sequence is AIAKDNIIPFLRVFGHGKVNGEP. 2 helical membrane passes run 555–575 and 576–598; these read TWALLLTALIAELGILIASLD and MVAPILSMFFLMCYLFVNLACAV. Tyrosine 589 provides a ligand contact to chloride. Residues 599 to 612 lie on the Cytoplasmic side of the membrane; the sequence is QTLLRTPNWRPRFK. The next 2 membrane-spanning stretches (helical) occupy residues 613–635 and 636–651; these read YYHWALSFLGMSLCLALMFVSSW and YYALVAMLIAGMIYKY. Over 652 to 1085 the chain is Cytoplasmic; that stretch reads IEYQGAEKEW…GGREVITIYS (434 aa). The scissor helix stretch occupies residues 665–681; sequence IRGLSLSAARYALLRLE. Leucine 697, lysine 699, lysine 707, tyrosine 708, and valine 730 together coordinate ATP. Serine 734 carries the post-translational modification Phosphoserine. ATP contacts are provided by glycine 794, tryptophan 795, and tyrosine 797. Residues serine 916 and serine 967 each carry the phosphoserine modification. Threonine 983 is modified (phosphothreonine). Serine 1050 carries the phosphoserine modification.

Belongs to the SLC12A transporter family. K/Cl co-transporter subfamily. As to quaternary structure, homodimer; adopts a domain-swap conformation at the scissor helices connecting the transmembrane domain and C-terminal domain. Heterodimer with other K-Cl cotransporters. Post-translationally, phosphorylated, phosphorylation may regulate transporter activity. In terms of tissue distribution, ubiquitous. Levels are much higher in erythrocytes from patients with Hb SC and Hb SS compared to normal AA erythrocytes. This may contribute to red blood cell dehydration and to the manifestation of sickle cell disease by increasing the intracellular concentration of HbS. Not detected in circulating reticulocytes.

The protein resides in the cell membrane. The enzyme catalyses K(+)(in) + chloride(in) = K(+)(out) + chloride(out). Its activity is regulated as follows. Inhibited by WNK3. Mediates electroneutral potassium-chloride cotransport when activated by cell swelling. May contribute to cell volume homeostasis in single cells. May be involved in the regulation of basolateral Cl(-) exit in NaCl absorbing epithelia. Functionally, no transporter activity. The protein is Solute carrier family 12 member 4 of Homo sapiens (Human).